A 141-amino-acid polypeptide reads, in one-letter code: Large ribosomal subunit protein uL11 (141 aa).

It belongs to the universal ribosomal protein uL11 family. In terms of assembly, part of the ribosomal stalk of the 50S ribosomal subunit. Interacts with L10 and the large rRNA to form the base of the stalk. L10 forms an elongated spine to which L12 dimers bind in a sequential fashion forming a multimeric L10(L12)X complex. One or more lysine residues are methylated.

Functionally, forms part of the ribosomal stalk which helps the ribosome interact with GTP-bound translation factors. The protein is Large ribosomal subunit protein uL11 of Streptococcus uberis (strain ATCC BAA-854 / 0140J).